The following is a 147-amino-acid chain: Probable flagellum biosynthesis repressor protein FlbT (147 aa).

The protein belongs to the FlbT family.

Has a post-transcriptional repressor function in flagellum biogenesis. Associates with the 5'-UTR of fljK mRNA and promotes its degradation. This chain is Probable flagellum biosynthesis repressor protein FlbT, found in Mesorhizobium japonicum (strain LMG 29417 / CECT 9101 / MAFF 303099) (Mesorhizobium loti (strain MAFF 303099)).